Consider the following 955-residue polypeptide: Kinesin-like protein K39 (955 aa).

In terms of domain architecture, Kinesin motor spans 12–392 (RVKVSVRVRP…LRYASRARDI (381 aa)). 122-129 (GQTGSGKT) contacts ATP. Residues 426-955 (PAYVSELKKK…EERAAELASQ (530 aa)) adopt a coiled-coil conformation. 2 disordered regions span residues 682–712 (ELDA…RESE) and 725–955 (TAAA…LASQ). A run of 7 repeats spans residues 704 to 742 (LEQQ…TRAT), 743 to 781 (LEQQ…TRAT), 782 to 820 (LEQQ…TRAT), 821 to 859 (LEQQ…TRAT), 860 to 898 (LEQQ…TRAT), 899 to 937 (LEQQ…TRAA), and 938 to 955 (LEQQ…LASQ). A 7 X 39 AA approximate tandem repeats region spans residues 704-955 (LEQQLRESEE…EERAAELASQ (252 aa)). 5 stretches are compositionally biased toward basic and acidic residues: residues 785-794 (QLRDSEERAA), 824-833 (QLRDSEERAA), 863-872 (QLRESEERAA), 902-911 (QLRDSEERAA), and 941-955 (QLRD…LASQ).

It belongs to the TRAFAC class myosin-kinesin ATPase superfamily. Kinesin family.

Its subcellular location is the cytoplasm. The protein resides in the cytoskeleton. This chain is Kinesin-like protein K39 (KIN), found in Leishmania chagasi.